Consider the following 505-residue polypeptide: NADH-quinone oxidoreductase subunit N 1 (505 aa).

14 helical membrane passes run 18–38, 45–65, 84–104, 116–136, 138–158, 173–193, 223–243, 271–291, 292–312, 319–339, 345–365, 391–411, 429–449, and 473–493; these read LIPE…EMVL, LIAT…AWDF, YVGQ…SILA, IEFY…AQAN, FVLF…LVSY, LIMG…LYGV, FLAA…IGAF, AGFA…WWLV, QPVL…AALT, LIGL…IASH, VGAV…VFGV, FLAA…PLAG, GLLA…FGWI, and VGAA…LFGV.

It belongs to the complex I subunit 2 family. NDH-1 is composed of 14 different subunits. Subunits NuoA, H, J, K, L, M, N constitute the membrane sector of the complex.

Its subcellular location is the cell inner membrane. It catalyses the reaction a quinone + NADH + 5 H(+)(in) = a quinol + NAD(+) + 4 H(+)(out). Functionally, NDH-1 shuttles electrons from NADH, via FMN and iron-sulfur (Fe-S) centers, to quinones in the respiratory chain. The immediate electron acceptor for the enzyme in this species is believed to be ubiquinone. Couples the redox reaction to proton translocation (for every two electrons transferred, four hydrogen ions are translocated across the cytoplasmic membrane), and thus conserves the redox energy in a proton gradient. In Opitutus terrae (strain DSM 11246 / JCM 15787 / PB90-1), this protein is NADH-quinone oxidoreductase subunit N 1.